Reading from the N-terminus, the 475-residue chain is Ribulose bisphosphate carboxylase large chain (475 aa).

Residues 1–2 (MS) constitute a propeptide that is removed on maturation. Proline 3 carries the N-acetylproline modification. Lysine 14 bears the N6,N6,N6-trimethyllysine mark. Residues asparagine 123 and threonine 173 each contribute to the substrate site. Lysine 175 acts as the Proton acceptor in catalysis. Lysine 177 contacts substrate. Mg(2+)-binding residues include lysine 201, aspartate 203, and glutamate 204. Lysine 201 carries the post-translational modification N6-carboxylysine. The Proton acceptor role is filled by histidine 294. Residues arginine 295, histidine 327, and serine 379 each coordinate substrate.

Belongs to the RuBisCO large chain family. Type I subfamily. In terms of assembly, heterohexadecamer of 8 large chains and 8 small chains; disulfide-linked. The disulfide link is formed within the large subunit homodimers. The cofactor is Mg(2+). In terms of processing, the disulfide bond which can form in the large chain dimeric partners within the hexadecamer appears to be associated with oxidative stress and protein turnover.

The protein localises to the plastid. Its subcellular location is the chloroplast. It catalyses the reaction 2 (2R)-3-phosphoglycerate + 2 H(+) = D-ribulose 1,5-bisphosphate + CO2 + H2O. It carries out the reaction D-ribulose 1,5-bisphosphate + O2 = 2-phosphoglycolate + (2R)-3-phosphoglycerate + 2 H(+). Functionally, ruBisCO catalyzes two reactions: the carboxylation of D-ribulose 1,5-bisphosphate, the primary event in carbon dioxide fixation, as well as the oxidative fragmentation of the pentose substrate in the photorespiration process. Both reactions occur simultaneously and in competition at the same active site. This is Ribulose bisphosphate carboxylase large chain from Betula papyrifera (Paper birch).